The chain runs to 183 residues: MSENYTPRLKTRYREEIKKALNEEFKYENVMQIPGVTKVVVNMGVGDAARDSKMINGALEDLTAITGQKPQVRRAKKSIANFKLREGMPIGARVTLRGDRMWEFLDRLLTIALPRIRDFRGLSDQQFDGHGNYTFGLSEQTMFYEIDIDKVDRPRGMDITVVTSATNDEEGRKLLRELGFPFK.

The protein belongs to the universal ribosomal protein uL5 family. Part of the 50S ribosomal subunit; part of the 5S rRNA/L5/L18/L25 subcomplex. Contacts the 5S rRNA and the P site tRNA. Forms a bridge to the 30S subunit in the 70S ribosome.

This is one of the proteins that bind and probably mediate the attachment of the 5S RNA into the large ribosomal subunit, where it forms part of the central protuberance. In the 70S ribosome it contacts protein S13 of the 30S subunit (bridge B1b), connecting the 2 subunits; this bridge is implicated in subunit movement. Contacts the P site tRNA; the 5S rRNA and some of its associated proteins might help stabilize positioning of ribosome-bound tRNAs. The protein is Large ribosomal subunit protein uL5 of Corynebacterium aurimucosum (strain ATCC 700975 / DSM 44827 / CIP 107346 / CN-1) (Corynebacterium nigricans).